The chain runs to 1515 residues: Homeobox protein cut-like 1 (1515 aa).

Residues 56–361 (LLKSFQGEID…VKKELNTLKS (306 aa)) adopt a coiled-coil conformation. Over residues 393 to 405 (ENATLRISNSDLS) the composition is skewed to polar residues. Disordered regions lie at residues 393–453 (ENAT…SPAG), 509–546 (PYSTNSISSPSPLQQSPDVNGMAPSPSQSESAGSISEG), 644–666 (PKRRNRSEGNITTRIRASETGSD), and 680–702 (LQVQKTAEPVQTSSTSSSGNSDD). The span at 422-432 (GPLPASPPPQL) shows a compositional bias: pro residues. Phosphoserine is present on Ser427. Positions 436–447 (TGEQVSNTNGTH) are enriched in polar residues. Residues 514–544 (SISSPSPLQQSPDVNGMAPSPSQSESAGSIS) show a composition bias toward low complexity. The CUT 1 DNA-binding region spans 540-627 (AGSISEGEEI…ILALRSIQGR (88 aa)). Phosphoserine is present on Ser761. Disordered stretches follow at residues 769 to 871 (PETS…SASA) and 884 to 923 (YSQSSELSLTGASRSETPQNSPLPSSPIVPMAKPAKPSVP). Residues Lys783, Lys809, and Lys840 each participate in a glycyl lysine isopeptide (Lys-Gly) (interchain with G-Cter in SUMO2) cross-link. Positions 828–852 (PERRNLTSSEETKADETTASGKERA) are enriched in basic and acidic residues. Composition is skewed to polar residues over residues 853–868 (GSSQPRAERSQLQGPS) and 884–906 (YSQSSELSLTGASRSETPQNSPL). Ser904 is subject to Phosphoserine. The segment at residues 929–1016 (QYEVYMYQEV…QGVLPVQGQQ (88 aa)) is a DNA-binding region (CUT 2). The span at 1032–1044 (QQGCVSSESTPKT) shows a compositional bias: polar residues. The interval 1032-1105 (QQGCVSSEST…QPTTPLPLSG (74 aa)) is disordered. Over residues 1045 to 1061 (SASCSPAPESPMSSSES) the composition is skewed to low complexity. Ser1054 and Ser1064 each carry phosphoserine. The CUT 3 DNA-binding region spans 1112 to 1199 (QELVAMSPEL…VEKLMDMKRM (88 aa)). A disordered region spans residues 1207–1242 (RRHSSVSDSQPCEPPSVGIDYSQGASPQPQHQLKKP). Residues 1239–1298 (LKKPRVVLAPEEKEALKRAYQQKPYPSPKTIEELATQLNLKTSTVINWFHNYRSRIRREL) constitute a DNA-binding region (homeobox). Phosphoserine is present on Ser1265. A Glycyl lysine isopeptide (Lys-Gly) (interchain with G-Cter in SUMO2) cross-link involves residue Lys1279. Positions 1307 to 1488 (SQGQAGASDS…AGARDNPVRK (182 aa)) are disordered. Positions 1313–1328 (ASDSPSARSSRAAPSS) are enriched in low complexity. A compositionally biased stretch (acidic residues) spans 1331–1343 (DSCDGVEATDAEE). Residue Ser1332 is modified to Phosphoserine. Residues 1365 to 1378 (ADREEATQPAEKAK) are compositionally biased toward basic and acidic residues. The segment covering 1406–1468 (ADAPAPVPSL…ANAPARRPSS (63 aa)) has biased composition (low complexity). Phosphoserine occurs at positions 1468, 1496, and 1506.

This sequence belongs to the CUT homeobox family. Interacts with BANP. Interacts with SATB1 (via DNA-binding domains); the interaction inhibits the attachment of both proteins to DNA. In terms of processing, phosphorylated by PKA. Post-translationally, as cells progress into S phase, a fraction of CUX1 molecules is proteolytically processed into N-terminally truncated proteins of 110 kDa by CTSL. Cell cycle-dependent processing of CUX1 serves to generate a CDP/Cux p110 with distinct DNA binding and transcriptional properties. In terms of tissue distribution, testis-specific where it is expressed in germ cells.

The protein localises to the nucleus. Functionally, transcription factor involved in the control of neuronal differentiation in the brain. Regulates dendrite development and branching, and dendritic spine formation in cortical layers II-III. Also involved in the control of synaptogenesis. In addition, it has probably a broad role in mammalian development as a repressor of developmentally regulated gene expression. May act by preventing binding of positively-activing CCAAT factors to promoters. Component of nf-munr repressor; binds to the matrix attachment regions (MARs) (5' and 3') of the immunoglobulin heavy chain enhancer. Represses T-cell receptor (TCR) beta enhancer function by binding to MARbeta, an ATC-rich DNA sequence located upstream of the TCR beta enhancer. Binds to the TH enhancer; may require the basic helix-loop-helix protein TCF4 as a coactivator. Plays a role in cell cycle progression, in particular at the G1/S transition. As cells progress into S phase, a fraction of CUX1 molecules is proteolytically processed into N-terminally truncated proteins of 110 kDa. While CUX1 only transiently binds to DNA and carries the CCAAT-displacement activity, CDP/Cux p110 makes a stable interaction with DNA and stimulates expression of genes such as POLA1. This chain is Homeobox protein cut-like 1, found in Mus musculus (Mouse).